Here is a 378-residue protein sequence, read N- to C-terminus: Myoglobin (378 aa).

Histidine 332 is a binding site for heme.

This sequence belongs to the indoleamine 2,3-dioxygenase family. As to quaternary structure, homodimer. Heme serves as cofactor.

In terms of biological role, serves a reserve supply of oxygen and facilitates the movement of oxygen within muscles. The polypeptide is Myoglobin (Haliotis madaka (Giant abalone)).